A 551-amino-acid polypeptide reads, in one-letter code: Electron transfer flavoprotein-ubiquinone oxidoreductase (551 aa).

Position 10–24 (10–24) interacts with FAD; that stretch reads VVIVGAGPAGLSAAC. Residues cysteine 496, cysteine 520, cysteine 523, and cysteine 526 each coordinate [4Fe-4S] cluster. The 4Fe-4S ferredoxin-type domain occupies 511–540; it reads KRFQINAQNCVHCKTCDIKDPAQNITWVAP.

It belongs to the ETF-QO/FixC family. The cofactor is [4Fe-4S] cluster. FAD is required as a cofactor.

The catalysed reaction is a ubiquinone + reduced [electron-transfer flavoprotein] = a ubiquinol + oxidized [electron-transfer flavoprotein] + H(+). Functionally, accepts electrons from ETF and reduces ubiquinone. This chain is Electron transfer flavoprotein-ubiquinone oxidoreductase, found in Pseudomonas aeruginosa (strain ATCC 15692 / DSM 22644 / CIP 104116 / JCM 14847 / LMG 12228 / 1C / PRS 101 / PAO1).